The following is a 599-amino-acid chain: Elongation factor 4 (599 aa).

The tr-type G domain occupies 5 to 187 (DLIRNFSIVA…AIVTRLPPPK (183 aa)). GTP-binding positions include 17-22 (DHGKST) and 134-137 (NKID).

The protein belongs to the TRAFAC class translation factor GTPase superfamily. Classic translation factor GTPase family. LepA subfamily.

Its subcellular location is the cell inner membrane. It catalyses the reaction GTP + H2O = GDP + phosphate + H(+). Functionally, required for accurate and efficient protein synthesis under certain stress conditions. May act as a fidelity factor of the translation reaction, by catalyzing a one-codon backward translocation of tRNAs on improperly translocated ribosomes. Back-translocation proceeds from a post-translocation (POST) complex to a pre-translocation (PRE) complex, thus giving elongation factor G a second chance to translocate the tRNAs correctly. Binds to ribosomes in a GTP-dependent manner. In Cereibacter sphaeroides (strain ATCC 17025 / ATH 2.4.3) (Rhodobacter sphaeroides), this protein is Elongation factor 4.